A 199-amino-acid chain; its full sequence is Early activation antigen CD69 (199 aa).

The span at 1–14 (MDSENCSITENSSS) shows a compositional bias: polar residues. The segment at 1-20 (MDSENCSITENSSSHLERGQ) is disordered. Topologically, residues 1-40 (MDSENCSITENSSSHLERGQKDHGTSIHFEKHHEGSIQVS) are cytoplasmic. A helical; Signal-anchor for type II membrane protein membrane pass occupies residues 41 to 61 (IPWAVLIVVLITSLIIALIAL). At 62-199 (NVGKYNCPGL…FHWVCSKPSR (138 aa)) the chain is on the extracellular side. Intrachain disulfides connect cysteine 85-cysteine 96, cysteine 113-cysteine 194, and cysteine 173-cysteine 186. The 104-residue stretch at 92–195 (YKRTCYFFST…CEANFHWVCS (104 aa)) folds into the C-type lectin domain. Asparagine 150, asparagine 166, and asparagine 180 each carry an N-linked (GlcNAc...) asparagine glycan.

Homodimer; disulfide-linked. Interacts with S100A8 and S100A9. Interacts with galactin-1/LGALS1. Interacts with S1PR1; this interaction mediates S1PR1 degradation. Interacts with JAK3 and STAT5. Post-translationally, constitutive Ser/Thr phosphorylation in both mature thymocytes and activated T-lymphocytes. As to expression, expressed on the surface of activated T-cells, B-cells, natural killer cells, neutrophils and platelets. Present also in eosinophils.

It is found in the cell membrane. Its function is as follows. Transmembrane protein expressed mainly on T-cells resident in mucosa that plays an essential role in immune cell homeostasis. Rapidly expressed on the surface of platelets, T-lymphocytes and NK cells upon activation by various stimuli, such as antigen recognition or cytokine signaling, stimulates different signaling pathways in different cell types. Negatively regulates Th17 cell differentiation through its carbohydrate dependent interaction with galectin-1/LGALS1 present on immature dendritic cells. Association of CD69 cytoplasmic tail with the JAK3/STAT5 signaling pathway regulates the transcription of RORgamma/RORC and, consequently, differentiation toward the Th17 lineage. Also acts via the S100A8/S100A9 complex present on peripheral blood mononuclear cells to promote the conversion of naive CD4 T-cells into regulatory T-cells. Acts as an oxidized low-density lipoprotein (oxLDL) receptor in CD4 T-lymphocytes and negatively regulates the inflammatory response by inducing the expression of PDCD1 through the activation of NFAT. Participates in adipose tissue-derived mesenchymal stem cells (ASCs)-mediated protection against P.aeruginosa infection. Mechanistically, specifically recognizes P.aeruginosa to promote ERK1 activation, followed by granulocyte-macrophage colony-stimulating factor (GM-CSF) and other inflammatory cytokines secretion. In eosinophils, induces IL-10 production through the ERK1/2 pathway. Negatively regulates the chemotactic responses of effector lymphocytes and dendritic cells (DCs) to sphingosine 1 phosphate/S1P by acting as a S1PR1 receptor agonist and facilitating the internalization and degradation of the receptor. The polypeptide is Early activation antigen CD69 (Cd69) (Mus musculus (Mouse)).